The following is a 143-amino-acid chain: AP-2 complex subunit sigma (143 aa).

It belongs to the adaptor complexes small subunit family. Adaptor protein complex 2 (AP-2) is a heterotetramer composed of two large adaptins (alpha-type subunit APL3 and beta-type subunit APL1), a medium chain (mu-type subunit APM4) and a small adaptin (sigma-type subunit APS2).

It localises to the cell membrane. Its subcellular location is the membrane. The protein resides in the coated pit. Functionally, component of the adaptor complexes which link clathrin to receptors in coated vesicles. Clathrin-associated protein complexes are believed to interact with the cytoplasmic tails of membrane proteins, leading to their selection and concentration. The sequence is that of AP-2 complex subunit sigma (aps-2) from Neurospora crassa (strain ATCC 24698 / 74-OR23-1A / CBS 708.71 / DSM 1257 / FGSC 987).